A 180-amino-acid polypeptide reads, in one-letter code: NAD(P)H-quinone oxidoreductase subunit I, chloroplastic (180 aa).

4Fe-4S ferredoxin-type domains are found at residues 55 to 84 (GRIHFELDKCIACEVCVRVCPIDLPVVDWR) and 95 to 124 (LNYSIDFGICIFCGNCVEYCPTNCLSMTEE). Positions 64, 67, 70, 74, 104, 107, 110, and 114 each coordinate [4Fe-4S] cluster.

The protein belongs to the complex I 23 kDa subunit family. As to quaternary structure, NDH is composed of at least 16 different subunits, 5 of which are encoded in the nucleus. Requires [4Fe-4S] cluster as cofactor.

The protein resides in the plastid. It is found in the chloroplast thylakoid membrane. The enzyme catalyses a plastoquinone + NADH + (n+1) H(+)(in) = a plastoquinol + NAD(+) + n H(+)(out). It catalyses the reaction a plastoquinone + NADPH + (n+1) H(+)(in) = a plastoquinol + NADP(+) + n H(+)(out). In terms of biological role, NDH shuttles electrons from NAD(P)H:plastoquinone, via FMN and iron-sulfur (Fe-S) centers, to quinones in the photosynthetic chain and possibly in a chloroplast respiratory chain. The immediate electron acceptor for the enzyme in this species is believed to be plastoquinone. Couples the redox reaction to proton translocation, and thus conserves the redox energy in a proton gradient. This chain is NAD(P)H-quinone oxidoreductase subunit I, chloroplastic, found in Chloranthus spicatus (Chulantree).